The following is a 357-amino-acid chain: Inositol-tetrakisphosphate 1-kinase 3 (357 aa).

The 1D-myo-inositol 1,3,4-trisphosphate site is built by lysine 56 and lysine 98. ATP-binding residues include arginine 133 and lysine 183. Residues histidine 190 and lysine 222 each coordinate 1D-myo-inositol 1,3,4-trisphosphate. ATP contacts are provided by residues 211–222, serine 237, and serine 262; that span reads QEFVNHGGVLFK. Mg(2+) contacts are provided by aspartate 302, aspartate 317, and asparagine 319. 1D-myo-inositol 1,3,4-trisphosphate is bound at residue asparagine 319.

This sequence belongs to the ITPK1 family. In terms of assembly, monomer. Requires Mg(2+) as cofactor.

The catalysed reaction is 1D-myo-inositol 3,4,5,6-tetrakisphosphate + ATP = 1D-myo-inositol 1,3,4,5,6-pentakisphosphate + ADP + H(+). The enzyme catalyses 1D-myo-inositol 1,3,4-trisphosphate + ATP = 1D-myo-inositol 1,3,4,5-tetrakisphosphate + ADP + H(+). It catalyses the reaction 1D-myo-inositol 1,3,4-trisphosphate + ATP = 1D-myo-inositol 1,3,4,6-tetrakisphosphate + ADP + H(+). Its function is as follows. Kinase that can phosphorylate various inositol polyphosphate such as Ins(3,4,5,6)P4 or Ins(1,3,4)P3 and participates in phytic acid biosynthesis in developing seeds. Phytic acid is the primary storage form of phosphorus in cereal grains and other plant seeds. The sequence is that of Inositol-tetrakisphosphate 1-kinase 3 (ITPK3) from Oryza sativa subsp. indica (Rice).